A 460-amino-acid polypeptide reads, in one-letter code: MAAATMSWDDGKHMKVKRVQITYEDVINSIEAEYDGDTHNPHHHGTPGKKSDGVSLSPDEYITDVTGYYKTTGAEDAIAALAFKTNKTEYGPYGNKTRNQFSIHAPKDNQIAGFQGISSNVLNSIDVHFAPLPSSSSSSSSLSQANKVDAQGGKGGTSWDDGAHDHVRRVYIGQGDSGVTYVKFEYEKDDKKESREHGKKTLLGAEVFEVDPDDYITSVEVQSDRIFGQDTEVITSLIFKTSKGKFSPPFGLEGSQKYELKDKNGGKLVGFHGRVGGELLNALGAYFAPSSGRGTPSATQPPGSAQPTGSAGAKKLEAKGGNVGNPWDDGPHEGVRKVYIGQGDSGVSYVKFVYDKDSKEVPGNDHGKRTLLAPEEFLLEYPNEYITSVELNYDKIFGTEGEIITMLRFTTNKRTSPPFGLEGAKSVLLKEDGHKIVGFHGKAGADIIHQVGVHVKPISK.

Residues 1-131 form the Jacalin-type lectin 1 domain; that stretch reads MAAATMSWDD…LNSIDVHFAP (131 aa). A2 is subject to N-acetylalanine. Disordered regions lie at residues 34–57, 133–162, and 291–334; these read YDGDTHNPHHHGTPGKKSDGVSLS, PSSSSSSSSLSQANKVDAQGGKGGTSWDDG, and SGRG…PHEG. The span at 133–143 shows a compositional bias: low complexity; that stretch reads PSSSSSSSSLS. Positions 145–289 constitute a Jacalin-type lectin 2 domain; that stretch reads ANKVDAQGGK…LNALGAYFAP (145 aa). A compositionally biased stretch (polar residues) spans 292 to 309; that stretch reads GRGTPSATQPPGSAQPTG. The Jacalin-type lectin 3 domain maps to 313-457; it reads AKKLEAKGGN…IHQVGVHVKP (145 aa).

The protein belongs to the jacalin lectin family.

The chain is Jacalin-related lectin 36 (JAL36) from Arabidopsis thaliana (Mouse-ear cress).